The sequence spans 442 residues: D-serine dehydratase (442 aa).

Residue K118 is modified to N6-(pyridoxal phosphate)lysine.

It belongs to the serine/threonine dehydratase family. DsdA subfamily. In terms of assembly, monomer. Pyridoxal 5'-phosphate is required as a cofactor.

The enzyme catalyses D-serine = pyruvate + NH4(+). This Escherichia coli O157:H7 protein is D-serine dehydratase.